The chain runs to 429 residues: Glutamate-1-semialdehyde 2,1-aminomutase (429 aa).

Residue K267 is modified to N6-(pyridoxal phosphate)lysine.

The protein belongs to the class-III pyridoxal-phosphate-dependent aminotransferase family. HemL subfamily. In terms of assembly, homodimer. It depends on pyridoxal 5'-phosphate as a cofactor.

It localises to the cytoplasm. It carries out the reaction (S)-4-amino-5-oxopentanoate = 5-aminolevulinate. Its pathway is porphyrin-containing compound metabolism; protoporphyrin-IX biosynthesis; 5-aminolevulinate from L-glutamyl-tRNA(Glu): step 2/2. This chain is Glutamate-1-semialdehyde 2,1-aminomutase, found in Xanthomonas axonopodis pv. citri (strain 306).